Reading from the N-terminus, the 159-residue chain is Ribosome-binding factor A (159 aa).

Basic and acidic residues-rich tracts occupy residues A118–E128 and D137–S146. Residues A118–D159 form a disordered region.

It belongs to the RbfA family. In terms of assembly, monomer. Binds 30S ribosomal subunits, but not 50S ribosomal subunits or 70S ribosomes.

It localises to the cytoplasm. One of several proteins that assist in the late maturation steps of the functional core of the 30S ribosomal subunit. Associates with free 30S ribosomal subunits (but not with 30S subunits that are part of 70S ribosomes or polysomes). Required for efficient processing of 16S rRNA. May interact with the 5'-terminal helix region of 16S rRNA. In Rhodococcus erythropolis (strain PR4 / NBRC 100887), this protein is Ribosome-binding factor A.